A 157-amino-acid polypeptide reads, in one-letter code: 3-hydroxyacyl-[acyl-carrier-protein] dehydratase FabZ (157 aa).

His-58 is an active-site residue.

The protein belongs to the thioester dehydratase family. FabZ subfamily.

Its subcellular location is the cytoplasm. The enzyme catalyses a (3R)-hydroxyacyl-[ACP] = a (2E)-enoyl-[ACP] + H2O. In terms of biological role, involved in unsaturated fatty acids biosynthesis. Catalyzes the dehydration of short chain beta-hydroxyacyl-ACPs and long chain saturated and unsaturated beta-hydroxyacyl-ACPs. In Rhizorhabdus wittichii (strain DSM 6014 / CCUG 31198 / JCM 15750 / NBRC 105917 / EY 4224 / RW1) (Sphingomonas wittichii), this protein is 3-hydroxyacyl-[acyl-carrier-protein] dehydratase FabZ.